The following is a 669-amino-acid chain: Small ribosomal subunit protein mS39 (669 aa).

The N-terminal 13 residues, 1–13 (MAAPCVRLGSVRC), are a transit peptide targeting the mitochondrion. 11 PPR repeats span residues 129 to 163 (IEGV…GTAP), 164 to 199 (SLET…DDQD), 209 to 239 (RPGQ…MPER), 240 to 274 (NAHS…RLTA), 275 to 314 (DVQT…NVRP), 315 to 351 (NLLT…NIEP), 352 to 392 (SLGT…FTLR), 396 to 430 (DVYF…DNRG), 438 to 472 (QSTY…LYYP), 473 to 507 (NSRG…GHSN), and 556 to 590 (SSAS…HRVP). The segment at 186-218 (DIQTSEQNQQDDQDQQETEDSKKRPGQYRKASE) is disordered. Positions 194-203 (QQDDQDQQET) are enriched in acidic residues. The disordered stretch occupies residues 648–669 (EDLQKSHSSSSSSSESSDSDRE). A compositionally biased stretch (low complexity) spans 653-663 (SHSSSSSSSES).

Belongs to the mitochondrion-specific ribosomal protein mS39 family.

The protein localises to the mitochondrion. Mitochondrial protein that may have a role in mitochondrial translation. This chain is Small ribosomal subunit protein mS39 (ptcd3), found in Xenopus laevis (African clawed frog).